The chain runs to 137 residues: Beta-synuclein (137 aa).

A run of 2 repeats spans residues 20–30 (EKTKQGVTEAA) and 31–41 (EKTKEGVLYVG). Positions 20–67 (EKTKQGVTEAAEKTKEGVLYVGSKTKEGVVQGVASVAEKTKEQASHLG) are 4 X 11 AA tandem repeats of [EGS]-K-T-K-[EQ]-[GQ]-V-X(4). Residues 42 to 56 (SKTKEGVVQGVASVA) form a 3; approximate repeat. Repeat 4 spans residues 57 to 67 (EKTKEQASHLG). Basic and acidic residues predominate over residues 88-97 (EFPTDLKPEE). The interval 88–137 (EFPTDLKPEEVAQEAAEEPLIEPLMEPEGESYEDSPQEEYQEYEPEAKGP) is disordered. Positions 98–131 (VAQEAAEEPLIEPLMEPEGESYEDSPQEEYQEYE) are enriched in acidic residues. At S118 the chain carries Phosphoserine; by BARK1, CK2 and GRK5.

It belongs to the synuclein family. Phosphorylated. Phosphorylation by G-protein coupled receptor kinases (GRK) is more efficient than phosphorylation by CK1, CK2 and CaM-kinase II. Expressed specifically in brain.

Its subcellular location is the cytoplasm. In terms of biological role, may be involved in neuronal plasticity. This is Beta-synuclein (Sncb) from Rattus norvegicus (Rat).